Consider the following 508-residue polypeptide: DNA-directed RNA polymerase subunit alpha (508 aa).

The interval 1–380 (MKHILLSCVE…HLFSPFLQTH (380 aa)) is alpha N-terminal domain (alpha-NTD). The alpha C-terminal domain (alpha-CTD) stretch occupies residues 434–508 (NLVTAIQTLD…LKNFGVLPTS (75 aa)).

This sequence belongs to the RNA polymerase alpha chain family. As to quaternary structure, in plastids the minimal PEP RNA polymerase catalytic core is composed of four subunits: alpha, beta, beta', and beta''. When a (nuclear-encoded) sigma factor is associated with the core the holoenzyme is formed, which can initiate transcription.

It localises to the plastid. It is found in the chloroplast. It carries out the reaction RNA(n) + a ribonucleoside 5'-triphosphate = RNA(n+1) + diphosphate. Its function is as follows. DNA-dependent RNA polymerase catalyzes the transcription of DNA into RNA using the four ribonucleoside triphosphates as substrates. The polypeptide is DNA-directed RNA polymerase subunit alpha (rpoA) (Oltmannsiellopsis viridis (Marine flagellate)).